Here is a 719-residue protein sequence, read N- to C-terminus: MQEPAITPDLIASHGLSPDEYDRILNIVGRTPTFTELGIFSAMWNEHCSYKSSKKWLRTLPTTGPQVICGPGENAGVVDIGDGQAVVFKMESHNHPSYIEPYQGAATGVGGILRDVFTMGARPIAAMNSLSFGEISHPKTRQLVNGVVAGVGGYGNCFGVPTVGGEVRFDPAYNGNCLVNAFAAGLADADKIFYSAASGVGMPVVYLGAKTGRDGVGGATMASAEFDDTIEEKRPTVQVGDPFTEKRLMEATLELMQTGAVISIQDMGAAGLTCSAVEMGDKGNLGVRLDLEKVPVREEAMTAYEMMLSESQERMLMVLRPELEQEAKAVFDKWDLDFAIVGETIAEDRFLIVHNGEVKADLPLKTLAGTAPEYDRPWVATPAADPLGDVPDVDPIDGLRALISSPNYASKDWVFTQYDTMVMADTVRIPGIGAGIVRVHGTDKALAFTSDVTPRYVQANPVEGGKQAVAEAYRNLSAVGATPLATTDNMNFGNPEKPEIMGQFVGAIKGISAAVAALDMPIVSGNVSLYNETDGTAILPTPTIGAVGLIAHLDDVIGCDVRDGHVALVLGETHGHLGQSAILSEVYNRAEGDAPPVDLDQEKAHGDFIRANRAYIKACTDLSDGGLALAAFEMAENAGVGVCLDASDTATLFGEDQGRYLIACNFDQAEALMIAASQAGLTLTSVGKFTGQAVRFGASSAPLAELSDVYRQSFGAALA.

The active site involves histidine 47. Residues tyrosine 50 and lysine 89 each contribute to the ATP site. Residue glutamate 91 coordinates Mg(2+). Substrate-binding positions include serine 92–histidine 95 and arginine 114. Residue histidine 93 is the Proton acceptor of the active site. A Mg(2+)-binding site is contributed by aspartate 115. Glutamine 238 contacts substrate. Aspartate 266 is a binding site for Mg(2+). Glutamate 310–glutamine 312 contributes to the substrate binding site. Aspartate 488 and glycine 525 together coordinate ATP. Asparagine 526 is a Mg(2+) binding site. Residue serine 528 participates in substrate binding.

The protein belongs to the FGAMS family. As to quaternary structure, monomer. Part of the FGAM synthase complex composed of 1 PurL, 1 PurQ and 2 PurS subunits.

It localises to the cytoplasm. The catalysed reaction is N(2)-formyl-N(1)-(5-phospho-beta-D-ribosyl)glycinamide + L-glutamine + ATP + H2O = 2-formamido-N(1)-(5-O-phospho-beta-D-ribosyl)acetamidine + L-glutamate + ADP + phosphate + H(+). The protein operates within purine metabolism; IMP biosynthesis via de novo pathway; 5-amino-1-(5-phospho-D-ribosyl)imidazole from N(2)-formyl-N(1)-(5-phospho-D-ribosyl)glycinamide: step 1/2. Part of the phosphoribosylformylglycinamidine synthase complex involved in the purines biosynthetic pathway. Catalyzes the ATP-dependent conversion of formylglycinamide ribonucleotide (FGAR) and glutamine to yield formylglycinamidine ribonucleotide (FGAM) and glutamate. The FGAM synthase complex is composed of three subunits. PurQ produces an ammonia molecule by converting glutamine to glutamate. PurL transfers the ammonia molecule to FGAR to form FGAM in an ATP-dependent manner. PurS interacts with PurQ and PurL and is thought to assist in the transfer of the ammonia molecule from PurQ to PurL. In Roseobacter denitrificans (strain ATCC 33942 / OCh 114) (Erythrobacter sp. (strain OCh 114)), this protein is Phosphoribosylformylglycinamidine synthase subunit PurL.